Reading from the N-terminus, the 205-residue chain is uncharacterized protein (205 aa).

Helical transmembrane passes span 18-38 (ATVNVIHPISLCLSWFLGTIG), 69-89 (LGIFQHLFYPIIPLLAFCFYA), 106-126 (VVWILAVSRHIVFLENSYYIM), and 127-147 (LLHPHHLHHPHPPFLIFLFLI).

It is found in the mitochondrion membrane. This is an uncharacterized protein from Arabidopsis thaliana (Mouse-ear cress).